A 384-amino-acid polypeptide reads, in one-letter code: MARDYYGLLGVARNATDQEIKRAYRKLARELHPDVNPDEAAQARFKEVSTAYEVLSDPEKRRIVDMGGDPLESGGGAGGFSGAGFGGLGDVFEAFFGGMSGAGGGQRKPRGRVQPGADSLLRTRLSLAECAVGVTKHLTVDTAVLCDACHGSGTHGNSKPVRCETCGGAGEVQSVQRSFLGQVLTSRPCPTCRGAGETIPDPCHKCGGDGRVRARREIAAPIPAGVANGMRVRLAAQGEVGPGGGPPGDLYVEIVEQPHDVFVRDGDDLHCTIRVPMVDAALGTTVVIDTILDGPTELTIPPGTQPGEVSVLRGHGMPKLRSGVRGDLLAHLDIVIPTKLDGKQTELLRKYKALRDRDRAEVMSAQSEHNSGLFARLRASFSGR.

Residues 4 to 68 (DYYGLLGVAR…EKRRIVDMGG (65 aa)) form the J domain. Residues 133–215 (GVTKHLTVDT…CGGDGRVRAR (83 aa)) form a CR-type zinc finger. Cysteine 146, cysteine 149, cysteine 163, cysteine 166, cysteine 189, cysteine 192, cysteine 203, and cysteine 206 together coordinate Zn(2+). CXXCXGXG motif repeat units follow at residues 146–153 (CDACHGSG), 163–170 (CETCGGAG), 189–196 (CPTCRGAG), and 203–210 (CHKCGGDG).

Belongs to the DnaJ family. As to quaternary structure, homodimer. It depends on Zn(2+) as a cofactor.

It localises to the cytoplasm. Functionally, participates actively in the response to hyperosmotic and heat shock by preventing the aggregation of stress-denatured proteins and by disaggregating proteins, also in an autonomous, DnaK-independent fashion. Unfolded proteins bind initially to DnaJ; upon interaction with the DnaJ-bound protein, DnaK hydrolyzes its bound ATP, resulting in the formation of a stable complex. GrpE releases ADP from DnaK; ATP binding to DnaK triggers the release of the substrate protein, thus completing the reaction cycle. Several rounds of ATP-dependent interactions between DnaJ, DnaK and GrpE are required for fully efficient folding. Also involved, together with DnaK and GrpE, in the DNA replication of plasmids through activation of initiation proteins. The sequence is that of Chaperone protein DnaJ 1 from Nocardia farcinica (strain IFM 10152).